The chain runs to 310 residues: MAKIVVALGGNALGKSPQEQLKLVKNTAKSLVGLITKGHEIVISHGNGPQVGSINLGLNYAAEHNQGPAFPFAECGAMSQAYIGYQLQESLQNELHSIGMDKQVVTLVTQVEVDENDPAFNNPSKPIGLFYNKEEAEQIQKEKGFTFVEDAGRGYRRVVPSPQPISIIELESIKTLIKNDTLVIAAGGGGIPVIREQHDGFKGIDAVIDKDKTSALLGANIQCDQLIILTAIDYVYINFNTENQQPLKTTNVDELKRYIDENQFAKGSMLPKIEAAISFIENNPKGSVLITSLNELDAALEGKVGTVIKK.

Belongs to the carbamate kinase family.

The protein localises to the cytoplasm. The enzyme catalyses hydrogencarbonate + NH4(+) + ATP = carbamoyl phosphate + ADP + H2O + H(+). The protein operates within metabolic intermediate metabolism; carbamoyl phosphate degradation; CO(2) and NH(3) from carbamoyl phosphate: step 1/1. The protein is Carbamate kinase 1 (arcC1) of Staphylococcus aureus (strain MRSA252).